Reading from the N-terminus, the 608-residue chain is Albumin (608 aa).

An N-terminal signal peptide occupies residues 1–18 (MKWVTFLLLLFVSDSAFS). The propeptide occupies 19-24 (RGLFRR). Albumin domains are found at residues 19–211 (RGLF…ALKE), 212–403 (KALA…EFQP), and 404–601 (LVEE…KLVA). Residue H27 participates in Cu cation binding. S29 carries the phosphoserine modification. Ca(2+)-binding residues include E30 and D37. Cysteines 77 and 86 form a disulfide. S82 and S89 each carry phosphoserine. Zn(2+) is bound at residue H91. 6 disulfides stabilise this stretch: C99/C115, C114/C125, C148/C193, C192/C201, C224/C270, and C269/C277. Residue E268 coordinates Ca(2+). Residues H271 and D273 each coordinate Zn(2+). Residues D273, E276, and D279 each contribute to the Ca(2+) site. Cystine bridges form between C289–C303, C302–C313, C340–C385, C384–C393, C416–C462, C461–C472, C485–C501, and C500–C511. S297 is modified (phosphoserine). The residue at position 443 (S443) is a Phosphoserine. 2 positions are modified to phosphothreonine: T444 and T446. N6-succinyllysine is present on K460. S513 carries the phosphoserine modification. 2 cysteine pairs are disulfide-bonded: C538–C583 and C582–C591. Position 543 is an N6-succinyllysine (K543). K558 is subject to N6-methyllysine. T570 bears the Phosphothreonine mark. Position 588 is an N6-succinyllysine (K588).

It belongs to the ALB/AFP/VDB family. Interacts with FCGRT; this interaction regulates ALB homeostasis. Interacts with TASOR. In plasma, occurs in a covalently-linked complex with chromophore-bound alpha-1-microglobulin; this interaction does not prevent fatty acid binding to ALB. As to expression, plasma.

Its subcellular location is the secreted. Its function is as follows. Binds water, Ca(2+), Na(+), K(+), fatty acids, hormones, bilirubin and drugs. Its main function is the regulation of the colloidal osmotic pressure of blood. Major zinc transporter in plasma, typically binds about 80% of all plasma zinc. Major calcium and magnesium transporter in plasma, binds approximately 45% of circulating calcium and magnesium in plasma. Potentially has more than two calcium-binding sites and might additionally bind calcium in a non-specific manner. The shared binding site between zinc and calcium at residue Asp-273 suggests a crosstalk between zinc and calcium transport in the blood. The rank order of affinity is zinc &gt; calcium &gt; magnesium. Binds to the bacterial siderophore enterobactin and inhibits enterobactin-mediated iron uptake of E.coli from ferric transferrin, and may thereby limit the utilization of iron and growth of enteric bacteria such as E.coli. Does not prevent iron uptake by the bacterial siderophore aerobactin. This is Albumin from Mesocricetus auratus (Golden hamster).